We begin with the raw amino-acid sequence, 101 residues long: Small ribosomal subunit protein bS18c (101 aa).

It belongs to the bacterial ribosomal protein bS18 family. Part of the 30S ribosomal subunit.

It localises to the plastid. Its subcellular location is the chloroplast. In Oenothera biennis (German evening primrose), this protein is Small ribosomal subunit protein bS18c.